Reading from the N-terminus, the 263-residue chain is Undecaprenyl-diphosphatase 2 (263 aa).

8 helical membrane-spanning segments follow: residues 17–37 (TEFL…LIGF), 42–62 (AKVF…VIFW), 83–103 (LHII…HSAI), 106–126 (VLFG…LMIV), 142–162 (ITYK…WPGF), 183–203 (AEYT…LDLI), 216–236 (LFAT…VSFL), and 242–262 (VKLT…YFFI).

It belongs to the UppP family.

Its subcellular location is the cell membrane. The enzyme catalyses di-trans,octa-cis-undecaprenyl diphosphate + H2O = di-trans,octa-cis-undecaprenyl phosphate + phosphate + H(+). In terms of biological role, catalyzes the dephosphorylation of undecaprenyl diphosphate (UPP). Confers resistance to bacitracin. In Bacillus anthracis, this protein is Undecaprenyl-diphosphatase 2.